The primary structure comprises 308 residues: Aspartate carbamoyltransferase catalytic subunit (308 aa).

Carbamoyl phosphate is bound by residues R49 and T50. Residue K77 coordinates L-aspartate. 3 residues coordinate carbamoyl phosphate: R99, H127, and Q130. Residues R160 and R211 each contribute to the L-aspartate site. The carbamoyl phosphate site is built by A252 and P253.

This sequence belongs to the aspartate/ornithine carbamoyltransferase superfamily. ATCase family. Heterododecamer (2C3:3R2) of six catalytic PyrB chains organized as two trimers (C3), and six regulatory PyrI chains organized as three dimers (R2).

The catalysed reaction is carbamoyl phosphate + L-aspartate = N-carbamoyl-L-aspartate + phosphate + H(+). It participates in pyrimidine metabolism; UMP biosynthesis via de novo pathway; (S)-dihydroorotate from bicarbonate: step 2/3. Catalyzes the condensation of carbamoyl phosphate and aspartate to form carbamoyl aspartate and inorganic phosphate, the committed step in the de novo pyrimidine nucleotide biosynthesis pathway. The sequence is that of Aspartate carbamoyltransferase catalytic subunit from Bacillus caldolyticus.